A 662-amino-acid polypeptide reads, in one-letter code: ATP-dependent RNA helicase DDX3X (662 aa).

Ser2 carries the post-translational modification N-acetylserine. Residues 2 to 139 (SHVAVENALG…KSDEDDWSKP (138 aa)) are required for TBK1 and IKBKE-dependent IFNB1 activation. The Nuclear export signal signature appears at 12–21 (LDQQFAGLDL). A disordered region spans residues 19-144 (LDLNSSDNQS…DWSKPLPPSE (126 aa)). The span at 21-34 (LNSSDNQSGGSTAS) shows a compositional bias: polar residues. The segment at 38 to 44 (YIPPHLR) is interaction with EIF4E. Basic and acidic residues predominate over residues 44–68 (RNREATKGFYDKDSSGWSSSKDKDA). Residue Lys55 is modified to N6-acetyllysine. Residues 70–89 (SSFGSRSDSRGKSSFFSDRG) are compositionally biased toward low complexity. The interval 81 to 90 (KSSFFSDRGS) is interaction with VACV protein K7. Phosphoserine occurs at positions 82, 86, and 90. The segment at 88-123 (RGSGSRGRFDDRGRSDYDGIGSRGDRSGFGKFERGG) is involved in binding to RNA G-quadruplex. Positions 94–130 (GRFDDRGRSDYDGIGSRGDRSGFGKFERGGNSRWCDK) are enriched in basic and acidic residues. The interaction with IKBKE stretch occupies residues 100-110 (GRSDYDGIGSR). An interaction with GSK3B region spans residues 100–662 (GRSDYDGIGS…NSQGVDWWGN (563 aa)). Arg101 bears the Omega-N-methylarginine mark. Position 102 is a phosphoserine; by IKKE (Ser102). Tyr104 carries the phosphotyrosine modification. Position 110 is an omega-N-methylarginine (Arg110). The residue at position 118 (Lys118) is an N6-acetyllysine. Ser131 carries the phosphoserine modification. Residues 139–172 (PLPPSERLEQELFSGGNTGINFEKYDDIPVEATG) are interaction with CHUK. Positions 180–208 (ESFSDVEMGEIIMGNIELTRYTRPTPVQK) match the Q motif motif. Ser181 is modified (phosphoserine; by TBK1; in vitro). A Phosphoserine; by TBK1 modification is found at Ser183. Position 200-207 (200-207 (YTRPTPVQ)) interacts with ATP. Residues 211–403 (IPIIKEKRDL…RDFLDEYIFL (193 aa)) enclose the Helicase ATP-binding domain. Lys215 participates in a covalent cross-link: Glycyl lysine isopeptide (Lys-Gly) (interchain with G-Cter in SUMO2). 224-231 (AQTGSGKT) is an ATP binding site. Ser240 is modified (phosphoserine; by TBK1; in vitro). Residues 250–259 (ALRAMKENGR) form an involved in stimulation of ATPase activity by DNA and RNA, nucleic acid binding and unwinding and HIV-1 replication region. Ser269 carries the post-translational modification Phosphoserine; by TBK1; in vitro. Residues 347 to 350 (DEAD) carry the DEAD box motif. Residues 409 to 662 (GSTSENITQK…NSQGVDWWGN (254 aa)) form an interaction with HCV core protein region. In terms of domain architecture, Helicase C-terminal spans 414 to 575 (NITQKVVWVE…EVPSWLENMA (162 aa)). Phosphoserine; by CSNK1E and TBK1; in vitro is present on Ser429. Residue Thr438 is modified to Phosphothreonine; by TBK1; in vitro. A phosphoserine; by TBK1; in vitro mark is found at Ser442 and Ser456. Thr469 is modified (phosphothreonine; by CSNK1E; in vitro). The residue at position 470 (Ser470) is a Phosphoserine; by CSNK1E; in vitro. Residue Ser520 is modified to Phosphoserine; by TBK1; in vitro. The interval 536 to 661 (GNLGLATSFF…YNSQGVDWWG (126 aa)) is interaction with NXF1. Thr542 is modified (phosphothreonine; by TBK1; in vitro). Ser543 carries the phosphoserine; by CSNK1E and TBK1; in vitro modification. Position 592 is an omega-N-methylarginine (Arg592). 3 positions are modified to phosphoserine: Ser594, Ser605, and Ser612. The interval 601 to 634 (DYRQSSGASSSSFSSSRASSSRSGGGGHGSSRGF) is disordered. Positions 604-622 (QSSGASSSSFSSSRASSSR) are enriched in low complexity. Residues Arg617 and Arg632 each carry the omega-N-methylarginine modification. Residues 623-634 (SGGGGHGSSRGF) show a composition bias toward gly residues.

Belongs to the DEAD box helicase family. DDX3/DED1 subfamily. In terms of assembly, homodimer; can bind RNA as a monomer and as a dimer/oligomer. Interacts with TDRD3. Interacts (when phosphorylated at Ser-102) with IRF3; the interaction facilitates the phosphorylation and activation of IRF3 by IKBKE. Directly interacts with XPO1/CRM1. The interaction with XPO1/CMR1 is dependent on the DDX3X nuclear export signal motif and XPO1 interaction with GTPase RAN in its active GTP-bound form. Weakly interacts with TBKBP1/SINTBAD. Directly interacts with TRAF3; this interaction stimulates TRAF3 'Lys-63' ubiquitination. Interacts with CSNK1E in a Wnt-dependent manner; this interaction greatly enhances CSNK1E affinity for ATP, stimulates its kinase activity and promotes CSNK1E-mediated DVL2 phosphorylation. In the presence of RNA, the interaction is decreased. Also interacts with CSNK1D and stimulates its kinase activity. Interacts with TRPV4; this interaction is decreased when the TRPV4 channel is activated, leading to DDX3X relocalization to the nucleus. Interacts with MAP3K14/NIK. Directly interacts with CHUK/IKKA after physiological activation of the TLR7 and TLR8 pathways; this interaction enhances CHUK autophosphorylation. May associate with EIF4F complex, composed of at least EIF4A, EIF4E and EIF4G1/EIF4G3. Directly interacts with EIF4E in an RNA-independent manner; this interaction enhances EIF4E cap-binding ability. Directly interacts with EIF4G1 in an RNA-independent manner. DDX3X competes with EIF4G1 for interaction with EIF4E. Interacts with EIF4A1 and EIF2S1 in an RNA-independent manner. Associates with the eukaryotic translation initiation factor 3 (eIF-3) complex, including with EIF3B and EIF3C subunits. Directly interacts with IKBKE/IKKE; this interaction stimulates IKBKE activating autophosphorylation and is induced upon viral infection. Interacts with TBK1. Interacts with SP1; this interaction potentiates SP1-induced CDKN1A/WAF1/CIP1 transcription. Interacts with GSK3A and GSK3B. Interacts with several death receptors, inclusing FAS, TNFRSF10A and TNFRSF10B. Recruited to TNFRSF10B in the absence of receptor stimulation. When TNFRSF10B is stimulated, further recruited to the receptor and cleaved by caspases. A large proteolytic fragment remains associated with TNFRSF10B. Interacts (via C-terminus) with NXF1/TAP; this interaction may be partly involved in DDX3X nuclear export and in NXF1 localization to stress granules. Identified in an mRNP complex, composed of at least DHX9, DDX3X, ELAVL1, HNRNPU, IGF2BP1/2, ILF3, PABPC1, PCBP2, PTBP2, STAU1, STAU2, SYNCRIP and YBX1. The interaction with IGF2BP1/2 is RNA-dependent. Directly interacts with PABPC1/PABP1 in an RNA-independent manner. This interaction increases in stressed cells and decreases during cell recovery. Interacts (via C-terminus) with MAVS/IPS-1; this interaction occurs rapidly, but transiently after Sendai virus infection. The interaction potentiates MAVS-mediated IFNB induction. Interacts with ERCC6/CBS. Interacts with DHX33 in an RNA-independent manner. Interacts with DDX5 in the cytoplasm; this interaction may be more efficient when both proteins are unphosphorylated. Interacts with RIGI/RIG-1. Interacts with IFIH1/MDA5. Interacts with NCAPH; this interaction may be important for the NCAPH localization at condensing chromosomes during mitosis. Interacts with NLRP3 (via NACHT domain) under inflammasome-activating conditions. Interacts with CAPRIN1. Interacts with HNF4A and NR0B2/SHP in an RNA-independent manner; this interaction disrupts the interaction between HNF4 and NR0B2 that forms inactive heterodimers and enhances the formation of active HNF4 homodimers. Interacts with CREBBP/CBP. Interacts with EP300/p300. Interacts with gamma-tubulin. Interacts with phosphorylated TP53. Directly interacts with RELA/p65; this interaction may trap RELA in the cytoplasm, impairing nuclear relocalization upon TNF activating signals. As to quaternary structure, (Microbial infection) Interacts with hepatitis B virus (HBV) polymerase in the cytoplasm; this interaction may inhibit DDX3X interaction with the IKBKE/TBK1 complex, and hence impair IKBKE/TBK1-mediated increase in IFNB production. (Microbial infection) Directly interacts with hepatitis C virus (HCV) core protein in the cytoplasm. In terms of assembly, (Microbial infection) Interacts with vaccinia virus (VACV) protein K7. As to quaternary structure, (Microbial infection) Interacts with HIV-1 protein Rev. (Microbial infection) Interacts with Venezuelan equine encephalitis virus non-structural protein 3. In terms of processing, phosphorylated by TBK1; the phosphorylation is required for the synergistic induction of IFNB mediated by TBK1 and DDX3X. Phosphorylated by IKBKE at Ser-102 after ssRNA viral infection; enhances the induction of INFB promoter by IRF3. The cytoplasmic form is highly phosphorylated in the G1/S phase of the cell cycle and much less at G2/M. Phosphorylation by CSNK1E may inhibit RNA-stimulated ATPase activity. Upon stimulation of death receptors, including TNFRSF10B, recruited to receptors and cleaved by caspases. Proteolytic fragments remain associated with the receptors. This cleavage presumably inactivates DDX3X anti-apoptotic function. Post-translationally, ubiquitinated by RNF39 via 'Lys-48'-linked ubiquitination; leading to proteasomal degradation. Widely expressed. In testis, expressed in spermatids. Expressed in epidermis and liver (at protein level).

It localises to the cell membrane. The protein resides in the nucleus. It is found in the cytoplasm. The protein localises to the stress granule. Its subcellular location is the inflammasome. It localises to the cell projection. The protein resides in the lamellipodium. It is found in the cytoskeleton. The protein localises to the microtubule organizing center. Its subcellular location is the centrosome. It carries out the reaction ATP + H2O = ADP + phosphate + H(+). Functionally, multifunctional ATP-dependent RNA helicase. The ATPase activity can be stimulated by various ribo-and deoxynucleic acids indicative for a relaxed substrate specificity. In vitro can unwind partially double-stranded DNA with a preference for 5'-single-stranded DNA overhangs. Binds RNA G-quadruplex (rG4s) structures, including those located in the 5'-UTR of NRAS mRNA. Involved in many cellular processes, which do not necessarily require its ATPase/helicase catalytic activities. Involved in transcription regulation. Positively regulates CDKN1A/WAF1/CIP1 transcription in an SP1-dependent manner, hence inhibits cell growth. This function requires its ATPase, but not helicase activity. CDKN1A up-regulation may be cell-type specific. Binds CDH1/E-cadherin promoter and represses its transcription. Potentiates HNF4A-mediated MTTP transcriptional activation; this function requires ATPase, but not helicase activity. Facilitates HNF4A acetylation, possibly catalyzed by CREBBP/EP300, thereby increasing the DNA-binding affinity of HNF4 to its response element. In addition, disrupts the interaction between HNF4 and SHP that forms inactive heterodimers and enhances the formation of active HNF4 homodimers. By promoting HNF4A-induced MTTP expression, may play a role in lipid homeostasis. May positively regulate TP53 transcription. Associates with mRNPs, predominantly with spliced mRNAs carrying an exon junction complex (EJC). Involved in the regulation of translation initiation. Not involved in the general process of translation, but promotes efficient translation of selected complex mRNAs, containing highly structured 5'-untranslated regions (UTR). This function depends on helicase activity. Might facilitate translation by resolving secondary structures of 5'-UTRs during ribosome scanning. Alternatively, may act prior to 43S ribosomal scanning and promote 43S pre-initiation complex entry to mRNAs exhibiting specific RNA motifs, by performing local remodeling of transcript structures located close to the cap moiety. Independently of its ATPase activity, promotes the assembly of functional 80S ribosomes and disassembles from ribosomes prior to the translation elongation process. Positively regulates the translation of cyclin E1/CCNE1 mRNA and consequently promotes G1/S-phase transition during the cell cycle. May activate TP53 translation. Required for endoplasmic reticulum stress-induced ATF4 mRNA translation. Independently of its ATPase/helicase activity, enhances IRES-mediated translation; this activity requires interaction with EIF4E. Independently of its ATPase/helicase activity, has also been shown specifically repress cap-dependent translation, possibly by acting on translation initiation factor EIF4E. Involved in innate immunity, acting as a viral RNA sensor. Binds viral RNAs and promotes the production of type I interferon (IFN-alpha and IFN-beta). Potentiate MAVS/RIGI-mediated induction of IFNB in early stages of infection. Enhances IFNB1 expression via IRF3/IRF7 pathway and participates in NFKB activation in the presence of MAVS and TBK1. Involved in TBK1 and IKBKE-dependent IRF3 activation leading to IFNB induction, acts as a scaffolding adapter that links IKBKE and IRF3 and coordinates their activation. Involved in the TLR7/TLR8 signaling pathway leading to type I interferon induction, including IFNA4 production. In this context, acts as an upstream regulator of IRF7 activation by MAP3K14/NIK and CHUK/IKKA. Stimulates CHUK autophosphorylation and activation following physiological activation of the TLR7 and TLR8 pathways, leading to MAP3K14/CHUK-mediated activatory phosphorylation of IRF7. Also stimulates MAP3K14/CHUK-dependent NF-kappa-B signaling. Negatively regulates TNF-induced IL6 and IL8 expression, via the NF-kappa-B pathway. May act by interacting with RELA/p65 and trapping it in the cytoplasm. May also bind IFNB promoter; the function is independent of IRF3. Involved in both stress and inflammatory responses. Independently of its ATPase/helicase activity, required for efficient stress granule assembly through its interaction with EIF4E, hence promotes survival in stressed cells. Independently of its helicase activity, regulates NLRP3 inflammasome assembly through interaction with NLRP3 and hence promotes cell death by pyroptosis during inflammation. This function is independent of helicase activity. Therefore DDX3X availability may be used to interpret stress signals and choose between pro-survival stress granules and pyroptotic NLRP3 inflammasomes and serve as a live-or-die checkpoint in stressed cells. In association with GSK3A/B, negatively regulates extrinsic apoptotic signaling pathway via death domain receptors, including TNFRSF10B, slowing down the rate of CASP3 activation following death receptor stimulation. Cleavage by caspases may inactivate DDX3X and relieve the inhibition. Independently of its ATPase/helicase activity, allosteric activator of CSNK1E. Stimulates CSNK1E-mediated phosphorylation of DVL2, thereby involved in the positive regulation of Wnt/beta-catenin signaling pathway. Also activates CSNK1A1 and CSNK1D in vitro, but it is uncertain if these targets are physiologically relevant. ATPase and casein kinase-activating functions are mutually exclusive. May be involved in mitotic chromosome segregation. Its function is as follows. (Microbial infection) Facilitates hepatitis C virus (HCV) replication. During infection, HCV core protein inhibits the interaction between MAVS and DDX3X and therefore impairs MAVS-dependent INFB induction and might recruit DDX3X to HCV replication complex. In terms of biological role, (Microbial infection) Facilitates HIV-1 replication. Acts as a cofactor for XPO1-mediated nuclear export of HIV-1 Rev RNAs. This function is strongly stimulated in the presence of TBK1 and requires DDX3X ATPase activity. (Microbial infection) Facilitates Zika virus (ZIKV) replication. Functionally, (Microbial infection) Facilitates Dengue virus (DENV) replication. Its function is as follows. (Microbial infection) Facilitates Venezuelan equine encephalitis virus (VEEV) replication. The chain is ATP-dependent RNA helicase DDX3X (DDX3X) from Homo sapiens (Human).